A 172-amino-acid polypeptide reads, in one-letter code: RTX-I toxin-activating lysine-acyltransferase ApxIC (172 aa).

Residues His-24 and Asp-93 contribute to the active site.

This sequence belongs to the RTX toxin acyltransferase family. As to quaternary structure, homodimer.

The protein localises to the cytoplasm. The enzyme catalyses a fatty acyl-[ACP] + L-lysyl-[protein] = N(6)-(fatty acyl)-L-lysyl-[protein] + holo-[ACP] + H(+). Functionally, protein-lysine acyltransferase that catalyzes fatty acylation of the protoxin, thereby converting it to the active toxin. This Actinobacillus pleuropneumoniae (Haemophilus pleuropneumoniae) protein is RTX-I toxin-activating lysine-acyltransferase ApxIC.